The following is a 267-amino-acid chain: MPQVTMRQMLEAGVHFGHQCRYWHPNMAQYIFGARGKIHIINLEKTVPLFNDAMNYLSSIAQKRGTILFLGTKRSARASIKEEAERCGMPFMTQRWLGGTLTNFRTVKQSVARLKELEAAETDGTFDKLVKHEVLSLRREREKLDASLGGIKEMNRLPDAIFVIDIGHEDIAIKEAKKLGIPVIAVVDTNYNPNLVDYAIPGNDDAIRAVQLYARAAADAVLEGKAAAPNSASVREEEFSAESADEGKGRRAPAKKGEKKADAPAAE.

The disordered stretch occupies residues 226 to 267 (AAAPNSASVREEEFSAESADEGKGRRAPAKKGEKKADAPAAE). A compositionally biased stretch (basic and acidic residues) spans 245-267 (DEGKGRRAPAKKGEKKADAPAAE).

Belongs to the universal ribosomal protein uS2 family.

This Xanthomonas oryzae pv. oryzae (strain MAFF 311018) protein is Small ribosomal subunit protein uS2.